The sequence spans 54 residues: Protein P32 (54 aa).

Residues 4 to 24 (FGKTLITIVTAIIGVAIIAVI) form a helical membrane-spanning segment.

The protein resides in the virion membrane. Functionally, component of the phage injection machinery. Required for DNA injection in the membrane transformation event. Involved in the formation of the membrane tail tube to connect the virus interior with the host cytosol. Essential for viral infectivity. This is Protein P32 (XXXII) from Enterobacteria phage PRD1 (Bacteriophage PRD1).